We begin with the raw amino-acid sequence, 403 residues long: S-adenosylmethionine synthase (403 aa).

Histidine 15 serves as a coordination point for ATP. Aspartate 17 is a binding site for Mg(2+). Glutamate 43 lines the K(+) pocket. 2 residues coordinate L-methionine: glutamate 56 and glutamine 99. The tract at residues 99–109 is flexible loop; the sequence is QSPDINQGVDR. ATP is bound by residues 166–168, 232–233, aspartate 241, 247–248, alanine 264, and lysine 268; these read DAK, KF, and RK. Aspartate 241 provides a ligand contact to L-methionine. Residue lysine 272 participates in L-methionine binding.

The protein belongs to the AdoMet synthase family. As to quaternary structure, homotetramer; dimer of dimers. It depends on Mg(2+) as a cofactor. K(+) is required as a cofactor.

The protein resides in the cytoplasm. It catalyses the reaction L-methionine + ATP + H2O = S-adenosyl-L-methionine + phosphate + diphosphate. The protein operates within amino-acid biosynthesis; S-adenosyl-L-methionine biosynthesis; S-adenosyl-L-methionine from L-methionine: step 1/1. Its function is as follows. Catalyzes the formation of S-adenosylmethionine (AdoMet) from methionine and ATP. The overall synthetic reaction is composed of two sequential steps, AdoMet formation and the subsequent tripolyphosphate hydrolysis which occurs prior to release of AdoMet from the enzyme. This Xylella fastidiosa (strain Temecula1 / ATCC 700964) protein is S-adenosylmethionine synthase.